The primary structure comprises 427 residues: MESLTLQPIARVDGAINLPGSKSVSNRALLLAALACGKTVLTNLLDSDDVRHMLNALSALGIDYTLSADRTRCDIIGNGGALRAPGDLELFLGNAGTAMRPLAAALCLGQNETVLTGEPRMKERPIGHLVDSLRQGGANIDYLEQENYPPLRLRGGFTGGDIEVDGSVSSQFLTALLMTAPLAPKDTIIRVKGELVSKPYIDITLNLMKTFGVEIMNHHYQQFVVKGGQQYHSPGRYLVEGDASSASYFLAAGAIKGGTVKVTGIGRKSMQGDIRFADVLEKMGATITWGDDFIACTRGELHAIDMDMNHIPDAAMTIATTALFAKGTTTLRNIYNWRVKETDRLFAMATELRKVGAEVEEGDDYIRITPPAKLHHADIGTYNDHRMAMCFSLVALSDTPVTILDPKCTAKTFPDYFEQLARISTPA.

Positions 22, 23, and 27 each coordinate 3-phosphoshikimate. Residue Lys-22 participates in phosphoenolpyruvate binding. The phosphoenolpyruvate site is built by Gly-96 and Arg-124. Residues Ser-169, Ser-170, Gln-171, Ser-197, Asp-313, Asn-336, and Lys-340 each contribute to the 3-phosphoshikimate site. Position 171 (Gln-171) interacts with phosphoenolpyruvate. Residue Asp-313 is the Proton acceptor of the active site. Arg-344, Arg-386, and Lys-411 together coordinate phosphoenolpyruvate.

This sequence belongs to the EPSP synthase family. Monomer.

The protein localises to the cytoplasm. The catalysed reaction is 3-phosphoshikimate + phosphoenolpyruvate = 5-O-(1-carboxyvinyl)-3-phosphoshikimate + phosphate. It functions in the pathway metabolic intermediate biosynthesis; chorismate biosynthesis; chorismate from D-erythrose 4-phosphate and phosphoenolpyruvate: step 6/7. Functionally, catalyzes the transfer of the enolpyruvyl moiety of phosphoenolpyruvate (PEP) to the 5-hydroxyl of shikimate-3-phosphate (S3P) to produce enolpyruvyl shikimate-3-phosphate and inorganic phosphate. This chain is 3-phosphoshikimate 1-carboxyvinyltransferase, found in Salmonella arizonae (strain ATCC BAA-731 / CDC346-86 / RSK2980).